Consider the following 673-residue polypeptide: Armadillo repeat-containing protein 8 (673 aa).

A2 is subject to N-acetylalanine. ARM repeat units lie at residues 51–92, 95–134, 138–176, 178–217, 224–265, 269–309, 313–352, 374–413, 416–455, 458–497, 501–540, 543–585, 588–627, and 634–673; these read NKQK…SLAM, ENNV…TIFT, TPEE…HCCK, PDHQ…VLAF, MTLV…YMCR, IRTD…YLIE, ELQR…HDLK, DIRK…SLSR, QQLR…NLLL, SPSK…NMAF, QKIK…NLLS, PHID…NIAD, TAKD…NLIW, and QERQ…QYLA. Position 337 is a phosphoserine (S337). The residue at position 512 (S512) is a Phosphoserine.

In terms of assembly, identified in the CTLH complex that contains GID4, RANBP9 and/or RANBP10, MKLN1, MAEA, RMND5A (or alternatively its paralog RMND5B), GID8, ARMC8, WDR26 and YPEL5. Within this complex, MAEA, RMND5A (or alternatively its paralog RMND5B), GID8, WDR26, and RANBP9 and/or RANBP10 form the catalytic core, while GID4, MKLN1, ARMC8 and YPEL5 have ancillary roles.

Its subcellular location is the nucleus. The protein resides in the cytoplasm. Functionally, component of the CTLH E3 ubiquitin-protein ligase complex that selectively accepts ubiquitin from UBE2H and mediates ubiquitination and subsequent proteasomal degradation of the transcription factor HBP1. The sequence is that of Armadillo repeat-containing protein 8 (ARMC8) from Homo sapiens (Human).